The chain runs to 783 residues: MSHEFSPENTAVLFEAMKQEQHNRRRRVPMERRRRVVLACFNCKARKVRCDGANPCKACASNNLECTYPVKDEKEMDYSKDYFIDLSKRYKCLEYIVERLCSTKVSTYTTPSLIEVCNRISNQKSLLSSDVFSLNSESTNSQRDVDTLTQGALVCSQIQQDPTVVAEDTNNGINADASDQSVDEIMKLIGKIKVDSNGESRYIGASAGEAFVDSVQSELLVDPSFSELSAYSHTHHSYPPNEHDVNAVQKALSLLPPPEVSDFLIKSFYGHVQANFFFFHETLLRYRLNLIMSFQNPSVDPGFLCLLMMIFALGSMFAHMEIRSASNPFDNPGKQFFDTARLLLPQVIQQCKPSLVQASILMGLYLQSTLSQKSSYTYFGLSLSAAVANGLHRSCENPNIDPKTKELRNRLWWSVYTMDRLISIATGRPLSIADSECDAALPTVVPELEIEGSASNVHNIISMSKIAKIMGKTMEQLYGTVNYKKNPINIIESLRADLEEWKRSLPPFQILENLDAEDPLFRANVHLHMTYDQAIIIMSRPVLLHKMKNAKNSPRVDRINEDCILAARHLISLVHLLQNHSQLSCYSFFDYNYTFSSALVVLLHCVTEPCEEDDIAMQYAYSALDYMAEGNEAAKNCARVIRLFDAHLKGARSDGNGNTSQSGFMAWQRWIAEVSAKDEPEKLMSPYNKSIGGGRNSNSLTPNANLGADVSFFPTDDTSFLLDHSKLDDDLEKFASTLDPIKTTPDLANDSSLLNWANTDQGMDIEGSWLGNMHPTWLDYVCP.

A DNA-binding region (zn(2)-C6 fungal-type) is located at residues 40-66 (CFNCKARKVRCDGANPCKACASNNLEC).

It localises to the cytoplasm. The protein localises to the nucleus. This is an uncharacterized protein from Schizosaccharomyces pombe (strain 972 / ATCC 24843) (Fission yeast).